The following is a 424-amino-acid chain: Tubulin-specific chaperone cofactor E-like protein (424 aa).

2 positions are modified to phosphoserine: serine 18 and serine 41. LRR repeat units lie at residues 73–98 (CAHV…IVSN), 99–123 (VPQL…TCAG), 124–147 (SFSG…HTIL), 150–172 (LPDL…PSVC), 173–197 (CHSL…KLGV), 199–224 (FPSL…SLAR), and 226–250 (FPNL…KLNS). An LRRCT domain is found at 262–303 (IPLLQPYTTEERRKLVVARLPSVSKLNGSVVTDGEREDSERF). The Ubiquitin-like domain maps to 334–424 (AEVDLRPQSS…DKIFVESKTK (91 aa)). The stretch at 350 to 375 (FNDQVEEVSIRLDQTVAELKRQLKTL) forms a coiled coil.

It is found in the cytoplasm. It localises to the cytoskeleton. In terms of biological role, acts as a regulator of tubulin stability. This Rattus norvegicus (Rat) protein is Tubulin-specific chaperone cofactor E-like protein (Tbcel).